The chain runs to 246 residues: Ribosome maturation factor RimM (246 aa).

Residues 1–15 (MKRKQESKGAGEKRQ) are compositionally biased toward basic and acidic residues. Residues 1 to 63 (MKRKQESKGA…NPQFTTPNPD (63 aa)) form a disordered region. The span at 45–54 (VPSPQSPIPN) shows a compositional bias: pro residues. Positions 158 to 239 (GEDEYHVVDL…RIEITPPPGL (82 aa)) constitute a PRC barrel domain.

The protein belongs to the RimM family. In terms of assembly, binds ribosomal protein uS19.

The protein localises to the cytoplasm. Functionally, an accessory protein needed during the final step in the assembly of 30S ribosomal subunit, possibly for assembly of the head region. Essential for efficient processing of 16S rRNA. May be needed both before and after RbfA during the maturation of 16S rRNA. It has affinity for free ribosomal 30S subunits but not for 70S ribosomes. The protein is Ribosome maturation factor RimM of Nostoc sp. (strain PCC 7120 / SAG 25.82 / UTEX 2576).